A 338-amino-acid chain; its full sequence is Glycerol-3-phosphate dehydrogenase [NAD(P)+] (338 aa).

Ser-14, Tyr-15, His-35, and Lys-109 together coordinate NADPH. Sn-glycerol 3-phosphate-binding residues include Lys-109, Gly-138, and Thr-140. Ala-142 lines the NADPH pocket. Sn-glycerol 3-phosphate-binding residues include Lys-194, Asp-247, Ser-257, Arg-258, and Asn-259. Catalysis depends on Lys-194, which acts as the Proton acceptor. NADPH is bound at residue Arg-258. Residues Val-282 and Glu-284 each coordinate NADPH.

It belongs to the NAD-dependent glycerol-3-phosphate dehydrogenase family.

The protein resides in the cytoplasm. The enzyme catalyses sn-glycerol 3-phosphate + NAD(+) = dihydroxyacetone phosphate + NADH + H(+). The catalysed reaction is sn-glycerol 3-phosphate + NADP(+) = dihydroxyacetone phosphate + NADPH + H(+). The protein operates within membrane lipid metabolism; glycerophospholipid metabolism. In terms of biological role, catalyzes the reduction of the glycolytic intermediate dihydroxyacetone phosphate (DHAP) to sn-glycerol 3-phosphate (G3P), the key precursor for phospholipid synthesis. This chain is Glycerol-3-phosphate dehydrogenase [NAD(P)+], found in Shewanella baltica (strain OS195).